Here is a 247-residue protein sequence, read N- to C-terminus: Synaptogyrin homolog 1 (247 aa).

The region spanning Phe21–Glu175 is the MARVEL domain. Helical transmembrane passes span Pro25–Ser45, Cys69–Leu89, Ala105–Phe125, and Phe151–Trp171. Positions Asp206–Tyr247 are disordered. A compositionally biased stretch (polar residues) spans Ser220–Tyr247.

Belongs to the synaptogyrin family. Expressed in a wide variety of neurons and is expressed weakly in the non-neuronal distal tip cells. A punctate pattern was observed in the ventral and dorsal nerve cords and the nerve ring. Weak expression is seen in neuronal cell bodies and commissures.

Its subcellular location is the membrane. In Caenorhabditis elegans, this protein is Synaptogyrin homolog 1 (sng-1).